We begin with the raw amino-acid sequence, 314 residues long: A-kinase anchor protein 7 isoform gamma (314 aa).

Positions methionine 1–lysine 46 are disordered. Residues arginine 24–aspartate 37 show a composition bias toward basic and acidic residues. AMP contacts are provided by residues threonine 95 and histidine 185 to threonine 187. Residues threonine 95 and histidine 185–threonine 187 each bind CMP. The interval alanine 260 to lysine 314 is PKA-RII-alpha subunit binding domain. Positions glutamate 261 to threonine 285 are RI-alpha-binding. The tract at residues leucine 262–leucine 275 is RII-binding. The interval tyrosine 281–lysine 314 is disordered. Residues lysine 298–lysine 314 show a composition bias toward basic and acidic residues.

As to quaternary structure, binds cAMP-dependent protein kinase (PKA). Interacts with PRKCA; only the cytoplasmic form is capable of interacting with PRKCA. As to expression, expressed in oocytes.

The protein resides in the nucleus. Its subcellular location is the cytoplasm. Probably targets cAMP-dependent protein kinase (PKA) to the cellular membrane or cytoskeletal structures. The membrane-associated form reduces epithelial sodium channel (ENaC) activity, whereas the free cytoplasmic form may negatively regulate ENaC channel feedback inhibition by intracellular sodium. This chain is A-kinase anchor protein 7 isoform gamma, found in Mus musculus (Mouse).